A 204-amino-acid chain; its full sequence is Large ribosomal subunit protein uL4 (204 aa).

The disordered stretch occupies residues 49-75 (TKGRSDVSGGGKKPWRQKGRGGARAGS).

It belongs to the universal ribosomal protein uL4 family. In terms of assembly, part of the 50S ribosomal subunit.

In terms of biological role, one of the primary rRNA binding proteins, this protein initially binds near the 5'-end of the 23S rRNA. It is important during the early stages of 50S assembly. It makes multiple contacts with different domains of the 23S rRNA in the assembled 50S subunit and ribosome. Forms part of the polypeptide exit tunnel. In Campylobacter jejuni subsp. jejuni serotype O:23/36 (strain 81-176), this protein is Large ribosomal subunit protein uL4.